The sequence spans 227 residues: Cytochrome c oxidase subunit 2 (227 aa).

Topologically, residues 1–14 are mitochondrial intermembrane; it reads MPYPMQLGFQDATS. Residues 15 to 45 traverse the membrane as a helical segment; it reads PIMEELTYFHDHTLMIVFLISSLVLYIIILM. At 46–59 the chain is on the mitochondrial matrix side; that stretch reads LTTKLTHTSTMDAQ. Residues 60 to 87 traverse the membrane as a helical segment; it reads EVETIWTILPAVILVLIALPSLRILYMM. The Mitochondrial intermembrane segment spans residues 88–227; it reads DEIYNPYLTI…YFEKWSSMMQ (140 aa). His-161, Cys-196, Glu-198, Cys-200, His-204, and Met-207 together coordinate Cu cation. Position 198 (Glu-198) interacts with Mg(2+). The residue at position 218 (Tyr-218) is a Phosphotyrosine.

Belongs to the cytochrome c oxidase subunit 2 family. As to quaternary structure, component of the cytochrome c oxidase (complex IV, CIV), a multisubunit enzyme composed of 14 subunits. The complex is composed of a catalytic core of 3 subunits MT-CO1, MT-CO2 and MT-CO3, encoded in the mitochondrial DNA, and 11 supernumerary subunits COX4I, COX5A, COX5B, COX6A, COX6B, COX6C, COX7A, COX7B, COX7C, COX8 and NDUFA4, which are encoded in the nuclear genome. The complex exists as a monomer or a dimer and forms supercomplexes (SCs) in the inner mitochondrial membrane with NADH-ubiquinone oxidoreductase (complex I, CI) and ubiquinol-cytochrome c oxidoreductase (cytochrome b-c1 complex, complex III, CIII), resulting in different assemblies (supercomplex SCI(1)III(2)IV(1) and megacomplex MCI(2)III(2)IV(2)). Found in a complex with TMEM177, COA6, COX18, COX20, SCO1 and SCO2. Interacts with TMEM177 in a COX20-dependent manner. Interacts with COX20. Interacts with COX16. Cu cation is required as a cofactor.

The protein resides in the mitochondrion inner membrane. The catalysed reaction is 4 Fe(II)-[cytochrome c] + O2 + 8 H(+)(in) = 4 Fe(III)-[cytochrome c] + 2 H2O + 4 H(+)(out). Component of the cytochrome c oxidase, the last enzyme in the mitochondrial electron transport chain which drives oxidative phosphorylation. The respiratory chain contains 3 multisubunit complexes succinate dehydrogenase (complex II, CII), ubiquinol-cytochrome c oxidoreductase (cytochrome b-c1 complex, complex III, CIII) and cytochrome c oxidase (complex IV, CIV), that cooperate to transfer electrons derived from NADH and succinate to molecular oxygen, creating an electrochemical gradient over the inner membrane that drives transmembrane transport and the ATP synthase. Cytochrome c oxidase is the component of the respiratory chain that catalyzes the reduction of oxygen to water. Electrons originating from reduced cytochrome c in the intermembrane space (IMS) are transferred via the dinuclear copper A center (CU(A)) of subunit 2 and heme A of subunit 1 to the active site in subunit 1, a binuclear center (BNC) formed by heme A3 and copper B (CU(B)). The BNC reduces molecular oxygen to 2 water molecules using 4 electrons from cytochrome c in the IMS and 4 protons from the mitochondrial matrix. The polypeptide is Cytochrome c oxidase subunit 2 (MT-CO2) (Osphranter robustus (Wallaroo)).